Here is a 521-residue protein sequence, read N- to C-terminus: Anaerobic nitric oxide reductase flavorubredoxin (521 aa).

A zinc metallo-hydrolase region spans residues 30 to 210; sequence HKGTSYNSYL…PFSPLVTAKI (181 aa). Fe cation-binding residues include His79, Glu81, Asp83, His147, Asp166, and His227. One can recognise a Flavodoxin-like domain in the interval 254-393; it reads ITLFYDSMSN…LCREHGRQLA (140 aa). FMN-binding positions include 260–264 and 342–369; these read SMSNN and AFGS…DISI. Residues 464-515 form the Rubredoxin-like domain; that stretch reads DQPMLCTVCQWIYDPALGEPDQLVAPGTPWARVPDSFLCPGCGIGKEVFEPC. Positions 469, 472, 502, and 505 each coordinate Fe cation.

It in the N-terminal section; belongs to the zinc metallo-hydrolase group 3 family. As to quaternary structure, homotetramer. Requires Fe cation as cofactor. It depends on FMN as a cofactor.

Its subcellular location is the cytoplasm. Its pathway is nitrogen metabolism; nitric oxide reduction. Its function is as follows. Anaerobic nitric oxide reductase; uses NADH to detoxify nitric oxide (NO), protecting several 4Fe-4S NO-sensitive enzymes. Has at least 2 reductase partners, only one of which (NorW, flavorubredoxin reductase) has been identified. NO probably binds to the di-iron center; electrons enter from the NorW at rubredoxin and are transferred sequentially to the FMN center and the di-iron center. Also able to function as an aerobic oxygen reductase. The protein is Anaerobic nitric oxide reductase flavorubredoxin of Aeromonas salmonicida (strain A449).